Consider the following 681-residue polypeptide: MSGSVSGCGSGGCSIVWFRRDLRVEDNPALAAAVRAGPVIALFVWAPEEEGHYHPGRVSRWWLKNSLAQLDSSLRSLGTCLITKRSTDSVASLLDVVKSTGASQIFFNHLYDPLSLVRDHRAKDVLTAQGIAVRSFNADLLYEPWEVTDELGRPFSMFAAFWERCLSMPYDPESPLLPPKKIISGDVSKCVADPLVFEDDSEKGSNALLARAWSPGWSNGDKALTTFINGPLLEYSKNRRKADSATTSFLSPHLHFGEVSVRKVFHLVRIKQVAWANEGNEAGEESVNLFLKSIGLREYSRYISFNHPYSHERPLLGHLKFFPWAVDENYFKAWRQGRTGYPLVDAGMRELWATGWLHDRIRVVVSSFFVKVLQLPWRWGMKYFWDTLLDADLESDALGWQYITGTLPDSREFDRIDNPQFEGYKFDPNGEYVRRWLPELSRLPTDWIHHPWNAPESVLQAAGIELGSNYPLPIVGLDEAKARLHEALSQMWQLEAASRAAIENGSEEGLGDSAEVEEAPIEFPRDITMEETEPTRLNPNRRYEDQMVPSITSSLIRPEEDEESSLNLRNSVGDSRAEVPRNMVNTNQAQQRRAEPASNQVTAMIPEFNIRIVAESTEDSTAESSSSGRRERSGGIVPEWSPGYSEQFPSEENGIGGGSTTSSYLQNHHEILNWRRLSQTG.

A CNT1, binds chromophores to sense blue light and mediate CRY dimerization region spans residues 1–489 (MSGSVSGCGS…AKARLHEALS (489 aa)). The region spanning 12–141 (GCSIVWFRRD…AVRSFNADLL (130 aa)) is the Photolyase/cryptochrome alpha/beta domain. Cysteine 80 and cysteine 190 are disulfide-bonded. FAD is bound at residue tyrosine 235. Asparagine 238 is a Mg(2+) binding site. Arginine 239 serves as a coordination point for ATP. Mg(2+)-binding residues include lysine 241, serine 244, and threonine 246. FAD contacts are provided by residues 247 to 251 (TSFLS) and serine 293. Histidine 358 serves as a coordination point for Mg(2+). Residues aspartate 359 and 390–392 (DAD) contribute to the FAD site. 359–360 (DR) contributes to the ATP binding site. Aspartate 409 contacts ATP. The segment at 490–681 (QMWQLEAASR…LNWRRLSQTG (192 aa)) is CCT1/CCE1, mediates blue light signaling. Disordered stretches follow at residues 525-598 (RDIT…EPAS) and 616-664 (STED…TSSY). A compositionally biased stretch (polar residues) spans 583-598 (MVNTNQAQQRRAEPAS). Serine 616 carries the phosphoserine modification. Threonine 621 is modified (phosphothreonine).

This sequence belongs to the DNA photolyase class-1 family. Homodimer. Interacts with ADO1, COP1 and PHYA. Interacts specifically with the dark/far-red (Pr) state of PHYB, but not with the red light-activated (Pfr). Interacts with PIF4 and PIF5 in the nucleus in response to low blue light (LBL). Binds to SPA1 and SPA4 in response to blue light, this interaction prevents SPA1/COP1 complex formation and thus avoid COP1-dependent degradation of the transcription factor HY5 by the proteasome and promotes hypocotyl elongation. Interacts with TCP2. Binding to ATP mediates conformational changes which facilitate flavin binding. It depends on FAD as a cofactor. (6R)-5,10-methylene-5,6,7,8-tetrahydrofolate serves as cofactor. Post-translationally, autophosphorylated; in response to blue light and when in complex with FAD cofactor. Kinase activity is optimal in the presence of magnesium ions, about 30 percent of the optimal activity in the presence of manganese ions, but inactive with calcium ions. Adopts an open conformation when phosphorylated upon photoexcitation and thus interacts with signaling partner proteins. As to expression, widely expressed. Expressed in the aerial tissues (e.g. cotyledons and leaf primordia), but not detected in the roots.

It localises to the cytoplasm. The protein resides in the nucleus. Its subcellular location is the PML body. With respect to regulation, light exposure induces a conformational change in the C-terminal domain CCT1 required for activity. Its function is as follows. Photoreceptor that mediates primarily blue light inhibition of hypocotyl elongation and photoperiodic control of floral initiation, and regulates other light responses, including circadian rhythms, tropic growth, stomata opening, guard cell development, root development, bacterial and viral pathogen responses, abiotic stress responses, cell cycles, programmed cell death, apical dominance, fruit and ovule development, seed dormancy, and magnetoreception. Photoexcited cryptochromes interact with signaling partner proteins to alter gene expression at both transcriptional and post-translational levels and, consequently, regulate the corresponding metabolic and developmental programs. Blue-light absorbing flavoprotein that activates reversible flavin photoreduction via an electron transport chain comprising a tryptophan triad (W-324, W-377 and W-400), accompanied by a large conformational change upon photoexcitation, or via an alternative electron transport that involves small metabolites, including NADPH, NADH, and ATP. The half-life of the activated signaling state is about 5 minutes. Also involved in the detection of blue/green ratio in light (shade under leaf canopies) and subsequent adaptations on plant growth and development. In darkness, the dark reoxidation of flavin occurs and leads to inactivated state. Perceives low blue light (LBL) and responds by directly contacting two bHLH transcription factors, PIF4 and PIF5, at chromatin on E-box variant 5'-CA[CT]GTG-3' to promote their activity and stimulate specific gene expression to adapt global physiology (e.g. hypocotyl elongation and hyponastic growth in low blue light). When activated by high-intensity blue light, catalyzes direct enzymatic conversion of molecular oxygen O(2) to reactive oxygen species (ROS) and hydrogen peroxide H(2)O(2) in vitro. ROS accumulation upon activation by blue light leads to cell death in protoplasts. Seems essential for blue-light-triggered and singlet oxygen-mediated programmed cell death (PCD). Required for the induction of nuclear genes encoding photoprotective components by GATA24 and GATA28 in extreme light intensities that exceed the electron utilization capacity of the chloroplast. Involved in shortening the circadian clock period, especially at 27 degrees Celsius, in blue light (BL) and required to maintain clock genes expression rhythm. Mediates blue light-induced gene expression and hypocotyl elongation through the inhibition of COP1-mediated degradation of the transcription factors BIT1 and HY5 and via the activation of anion channels at the plasma membrane, probably via auxin signaling. Required for the hypocotyl hook formation in darkness. Involved in blue light-dependent stomatal opening, CHS gene expression, transpiration, inhibition of stem growth and increase of root growth, probably by regulating abscisic acid (ABA). Prevents lateral roots growth by inhibiting auxin transport. Necessary for shade avoidance syndrome (SAS), characterized by leaf hyponasty and reduced lamina/petiole ratio, when exposed to blue light attenuation. Together with phototropins, involved in phototropism regulation by various blue light fluence; blue light attenuates phototropism in high fluence rates (100 umol.m-2.s-1) but enhances phototropism in low fluence rates (&lt;1.0 umol.m-2.s-1). Required for blue/UV-A wavelengths-mediated inhibition of explants shoot regeneration in vitro (e.g. new shoot apical meristems regeneration from excised cotyledons). Modulates anthocyanin accumulation in a PHYA-dependent manner in far-red-light. Acts as a PHYA/PHYB-dependent modulator of chlorophyll accumulation in red light. Contributes to most blue light deetiolation responses. May act as a chemical magnetoreceptor, via magnetically sensitive kinetics and quantum yields of photo-induced flavin / tryptophan radical pairs. The effect of near-null magnetic field on flowering is altered by changes of blue light cycle and intensity in a CRY1/CRY2-dependent manner. Involved in the strigolactone signaling that regulates hypocotyl growth in response to blue light. Modulates temperature-dependent growth and physiology maintenance, especially at warm ambient temperatures (e.g. 27 degrees Celsius) and in white light and low-light conditions, via HFR1-dependent activity; this process requires PTAC12/HMR/PAP5 (transcriptional transactivator). In terms of biological role, implicated in promoting R protein-mediated resistance to Pseudomonas syringae pv. tomato (Pst.) DC3000 under continuous light conditions. Promotes systemic acquired resistance (SAR) and PR gene expression triggered by P.syringae. This chain is Cryptochrome-1, found in Arabidopsis thaliana (Mouse-ear cress).